The primary structure comprises 270 residues: Formamidopyrimidine-DNA glycosylase (270 aa).

Catalysis depends on Pro-2, which acts as the Schiff-base intermediate with DNA. The Proton donor role is filled by Glu-3. Lys-58 serves as the catalytic Proton donor; for beta-elimination activity. DNA is bound by residues His-91, Arg-110, and Arg-151. An FPG-type zinc finger spans residues 236 to 270 (LVYGRDGLPCPNCGRALKHATIGQRASVWCSHCQR). Arg-260 (proton donor; for delta-elimination activity) is an active-site residue.

The protein belongs to the FPG family. As to quaternary structure, monomer. Zn(2+) is required as a cofactor.

The enzyme catalyses Hydrolysis of DNA containing ring-opened 7-methylguanine residues, releasing 2,6-diamino-4-hydroxy-5-(N-methyl)formamidopyrimidine.. It carries out the reaction 2'-deoxyribonucleotide-(2'-deoxyribose 5'-phosphate)-2'-deoxyribonucleotide-DNA = a 3'-end 2'-deoxyribonucleotide-(2,3-dehydro-2,3-deoxyribose 5'-phosphate)-DNA + a 5'-end 5'-phospho-2'-deoxyribonucleoside-DNA + H(+). Its function is as follows. Involved in base excision repair of DNA damaged by oxidation or by mutagenic agents. Acts as a DNA glycosylase that recognizes and removes damaged bases. Has a preference for oxidized purines, such as 7,8-dihydro-8-oxoguanine (8-oxoG). Has AP (apurinic/apyrimidinic) lyase activity and introduces nicks in the DNA strand. Cleaves the DNA backbone by beta-delta elimination to generate a single-strand break at the site of the removed base with both 3'- and 5'-phosphates. In Stenotrophomonas maltophilia (strain K279a), this protein is Formamidopyrimidine-DNA glycosylase.